Here is a 496-residue protein sequence, read N- to C-terminus: Glutamyl-tRNA(Gln) amidotransferase subunit A (496 aa).

Catalysis depends on charge relay system residues K75 and S150. S174 acts as the Acyl-ester intermediate in catalysis.

The protein belongs to the amidase family. GatA subfamily. As to quaternary structure, heterotrimer of A, B and C subunits.

It catalyses the reaction L-glutamyl-tRNA(Gln) + L-glutamine + ATP + H2O = L-glutaminyl-tRNA(Gln) + L-glutamate + ADP + phosphate + H(+). Functionally, allows the formation of correctly charged Gln-tRNA(Gln) through the transamidation of misacylated Glu-tRNA(Gln) in organisms which lack glutaminyl-tRNA synthetase. The reaction takes place in the presence of glutamine and ATP through an activated gamma-phospho-Glu-tRNA(Gln). This chain is Glutamyl-tRNA(Gln) amidotransferase subunit A, found in Burkholderia cenocepacia (strain HI2424).